The chain runs to 215 residues: GTP-binding nuclear protein Ran (215 aa).

The Small GTPase Ran-type domain occupies 6–170 (DIPTFKLVLV…LWLARKLLGD (165 aa)). Residues 17 to 24 (DGGTGKTT), 35 to 41 (EKKYVAT), G67, 121 to 124 (NKVD), and 149 to 151 (SAK) contribute to the GTP site. The tract at residues 36–44 (KKYVATLGV) is switch-I. Residues 67 to 83 (GQEKFGGLRDGYYIQGQ) form a switch-II region.

The protein belongs to the small GTPase superfamily. Ran family. In terms of assembly, found in a nuclear export complex with RanGTP, exportin and pre-miRNA.

Its subcellular location is the nucleus. GTP-binding protein involved in nucleocytoplasmic transport. Required for the import of protein into the nucleus and also for RNA export. Involved in chromatin condensation and control of cell cycle. This chain is GTP-binding nuclear protein Ran, found in Brugia malayi (Filarial nematode worm).